Here is a 735-residue protein sequence, read N- to C-terminus: Lebercilin-like protein (735 aa).

2 disordered regions span residues 12-54 (TEAH…NGSV) and 91-115 (EKPL…RGQK). The segment covering 43–53 (QSQNSQASNGS) has biased composition (low complexity). The stretch at 205–335 (TAKHQNEVKN…QQKLKEKDRE (131 aa)) forms a coiled coil. 4 disordered regions span residues 356-379 (YPKV…NMRH), 473-597 (SKEV…PRKH), 632-657 (KHRS…AGAR), and 685-735 (GRAG…KTVV). The span at 487 to 525 (TPRRPKENKEDQEKRAIPAEAEPTAKESEAHKDAEDKAL) shows a compositional bias: basic and acidic residues. A compositionally biased stretch (low complexity) spans 528 to 541 (AAGNAGDAGDAGDA). 3 stretches are compositionally biased toward basic and acidic residues: residues 542-553 (GNDREVVGEHKV), 573-588 (EVHG…EPGR), and 632-641 (KHRSEQELRL). A compositionally biased stretch (polar residues) spans 689–707 (SSDSEAVSKSPQTGPQASA).

The protein belongs to the LCA5 family.

The protein is Lebercilin-like protein of Mus musculus (Mouse).